The sequence spans 299 residues: Type II restriction enzyme BglI (299 aa).

Residues aspartate 116, aspartate 142, and isoleucine 143 each contribute to the Mg(2+) site.

In terms of assembly, homodimer. Mg(2+) serves as cofactor.

The enzyme catalyses Endonucleolytic cleavage of DNA to give specific double-stranded fragments with terminal 5'-phosphates.. In terms of biological role, a P subtype restriction enzyme that recognizes the double-stranded sequence 5'-GCCNNNNNGGC-3' and cleaves before N-8. This is Type II restriction enzyme BglI (bglIR) from Bacillus subtilis.